The chain runs to 458 residues: Probable Xaa-Pro aminopeptidase pepP (458 aa).

4 residues coordinate Mn(2+): aspartate 254, aspartate 265, glutamate 388, and glutamate 428.

The protein belongs to the peptidase M24B family. It depends on Mn(2+) as a cofactor.

It carries out the reaction Release of any N-terminal amino acid, including proline, that is linked to proline, even from a dipeptide or tripeptide.. Its function is as follows. Catalyzes the removal of a penultimate prolyl residue from the N-termini of peptides. This is Probable Xaa-Pro aminopeptidase pepP (pepP) from Botryotinia fuckeliana (strain B05.10) (Noble rot fungus).